The chain runs to 101 residues: Acylphosphatase (101 aa).

The Acylphosphatase-like domain maps to 11–99 (SWLVKAIGRV…PRLNRFDRLP (89 aa)). Residues Arg-26 and Asn-44 contribute to the active site.

This sequence belongs to the acylphosphatase family.

It catalyses the reaction an acyl phosphate + H2O = a carboxylate + phosphate + H(+). In Polaromonas naphthalenivorans (strain CJ2), this protein is Acylphosphatase (acyP).